The sequence spans 258 residues: Ribonuclease HII (258 aa).

One can recognise an RNase H type-2 domain in the interval 71–258; that stretch reads QLIAGIDEVG…PIKTMVNFKS (188 aa). A divalent metal cation contacts are provided by Asp77, Glu78, and Asp169.

The protein belongs to the RNase HII family. The cofactor is Mn(2+). It depends on Mg(2+) as a cofactor.

Its subcellular location is the cytoplasm. The enzyme catalyses Endonucleolytic cleavage to 5'-phosphomonoester.. In terms of biological role, endonuclease that specifically degrades the RNA of RNA-DNA hybrids. This Lactococcus lactis subsp. lactis (strain IL1403) (Streptococcus lactis) protein is Ribonuclease HII (rnhB).